The primary structure comprises 113 residues: Protein ORF3 (113 aa).

Hydrophobic regions lie at residues 1–21 (MGSP…CLCC) and 32–52 (AVVG…GLIL). Residues 27–67 (ASRLAAVVGGAAAVPAVVSGVTGLILSPSPSPIFIQPTPSP) form an interaction with host HPX region. Residues 47–71 (VTGLILSPSPSPIFIQPTPSPPMSF) form an interaction with the capsid protein region. Position 70 is a phosphoserine; by host (serine 70). The homodimerization, and interaction with host AMBP/bikunin stretch occupies residues 71–113 (FHNPGLELALDSRPAPLXPLGVTSPSAPPLPPVVDLPQLGLRR). The interval 90–113 (LGVTSPSAPPLPPVVDLPQLGLRR) is disordered. Positions 94-103 (SPSAPPLPPV) are interaction with host SRC, HCK, FYN, PIK3R3 and GRB2. A PTAP/PSAP motif motif is present at residues 95 to 98 (PSAP).

It belongs to the hepevirus ORF3 protein family. Forms homooligomers. Interacts with host SRC, HCK, FYN, PIK3R3 and GRB2 (via SH3 domain); binding does not activate the kinases. Interacts with host AMBP/bikunin and AMBP/alpha-1-microglobulin peptides. Interacts with host HPX/hemopexin. Interacts (when phosphorylated) with capsid protein ORF2. Interacts with host TSG101; this interaction plays a role in viral release from the host cell. Interacts with host SIRPA; this interaction down-regulates the phosphorylation of host IRF3. Palmitoylated in the N-terminus.

The protein resides in the host endoplasmic reticulum membrane. It is found in the host cytoplasm. It localises to the host cytoskeleton. The protein localises to the virion. Its subcellular location is the host cell membrane. Small multifunctional phosphoprotein involved in virion morphogenesis, egress and counteracting host innate immunity. Plays critical roles in the final steps of viral release by interacting with host TSG101, a member of the vacuolar protein-sorting pathway and using other cellular host proteins involved in vesicle formation pathway. Also acts as a viroporin and forms ion conductive pores allowing viral particle release. Impairs the generation of type I interferon by down-regulating host TLR3 and TLR7 as well as their downstream signaling pathways. Down-regulates the phosphorylation of host IRF3 via the interaction with host SIRP-alpha, thereby inhibiting IFN-I expression. Interacts with host microtubules. In Hepatitis E virus genotype 3 (isolate Human/United States/US2) (HEV-3), this protein is Protein ORF3.